The primary structure comprises 314 residues: MFKEEDSLRKGQNVAAWKTLLAGAVSGLLARSITAPMDTIKIRLQLTPANGLKPFGSQVMEVARSMIKNEGIRSFWKGNIPGSLLYVTYGSAQFSSYSLFNRYLTPFGLEARLHSLVVGAFAGITSSIVSYPFDVLRTRLVANNQMHSMSITREVRDIWKLEGLPGFFKGSIASMTTITLTASIMFGTYETIRIYCDENEKTTAAHKKWELATLNHSAGTIGGVIAKIITFPLETIRRRMQFMNSKHLEKFSRHSSVYGSYKGYGFARIGLQILKQEGVSSLYRGILVALSKTIPTTFVSFWGYETAIHYLRMY.

Helical transmembrane passes span 14 to 30 (VAAW…GLLA), 84 to 100 (LLYV…YSLF), 116 to 136 (LVVG…FDVL), 170 to 186 (GSIA…SIMF), 217 to 233 (SAGT…TFPL), and 285 to 302 (GILV…VSFW). 3 Solcar repeats span residues 14 to 103 (VAAW…FNRY), 110 to 195 (EARL…IRIY), and 210 to 310 (ELAT…AIHY).

It belongs to the mitochondrial carrier (TC 2.A.29) family.

It localises to the mitochondrion inner membrane. Mitochondrial transporter that mediates uptake of thiamine pyrophosphate (ThPP) into mitochondria. The polypeptide is Mitochondrial thiamine pyrophosphate carrier 1 (TPC1) (Saccharomyces cerevisiae (strain ATCC 204508 / S288c) (Baker's yeast)).